The primary structure comprises 473 residues: Glycine receptor subunit beta-type 4 (473 aa).

An N-terminal signal peptide occupies residues M1–G19. Topologically, residues Q20–H249 are extracellular. Residues N29, N105, and N151 are each glycosylated (N-linked (GlcNAc...) asparagine). C166 and C180 form a disulfide bridge. The chain crosses the membrane as a helical span at residues H250–L271. At D272–V276 the chain is on the cytoplasmic side. Residues P277–A297 form a helical membrane-spanning segment. The Extracellular segment spans residues R298 to K308. Residues A309 to T329 traverse the membrane as a helical segment. At V330–R439 the chain is on the cytoplasmic side. A helical membrane pass occupies residues Y440–Y460. At L461–L473 the chain is on the extracellular side.

Belongs to the ligand-gated ion channel (TC 1.A.9) family. Glycine receptor (TC 1.A.9.3) subfamily. In terms of assembly, pentamer.

It is found in the postsynaptic cell membrane. It localises to the synapse. Its subcellular location is the cell membrane. Its function is as follows. Glycine receptors are ligand-gated chloride channels. Channel opening is triggered by extracellular glycine. Contributes to the generation of inhibitory postsynaptic currents. This Caenorhabditis elegans protein is Glycine receptor subunit beta-type 4.